Reading from the N-terminus, the 521-residue chain is MEKSGFSPVGLRVLVVDDDPTWLKILEKMLKKCSYEVTTCGLAREALRLLRERKDGYDIVISDVNMPDMDGFKLLEHVGLELDLPVIMMSVDGETSRVMKGVQHGACDYLLKPIRMKELKIIWQHVLRKKLQEVRDIEGCGYEGGADWITRYDEAHFLGGGEDVSFGKKRKDFDFEKKLLQDESDPSSSSSKKARVVWSFELHHKFVNAVNQIGCDHKAGPKKILDLMNVPWLTRENVASHLQKYRLYLSRLEKGKELKCYSGGVKNADSSPKDVEVNSGYQSPGRSSYVFSGGNSLIQKATEIDPKPLASASLSDLNTDVIMPPKTKKTRIGFDPPISSSAFDSLLPWNDVPEVLESKPVLYENSFLQQQPLPSQSSYVANSAPSLMEEEMKPPYETPAGGSSVNADEFLMPQDKIPTVTLQDLDPSAMKLQEFNTEAILRSLNWELPESHHSVSLDTDLDLTWLQGERFLANTGLQFQDYSSSPSLLSELPAHLNWYGNERLPDPDEYSFMVDQGLFIS.

A Response regulatory domain is found at 12–127 (RVLVVDDDPT…ELKIIWQHVL (116 aa)). Residue aspartate 63 is modified to 4-aspartylphosphate. A Nuclear localization signal motif is present at residues 192–195 (KKAR). The myb-like GARP DNA-binding region spans 195-246 (RVVWSFELHHKFVNAVNQIGCDHKAGPKKILDLMNVPWLTRENVASHLQKYR).

Belongs to the ARR family. Type-B subfamily. As to quaternary structure, binds the target DNA as a monomer. Two-component system major event consists of a His-to-Asp phosphorelay between a sensor histidine kinase (HK) and a response regulator (RR). In plants, the His-to-Asp phosphorelay involves an additional intermediate named Histidine-containing phosphotransfer protein (HPt). This multistep phosphorelay consists of a His-Asp-His-Asp sequential transfer of a phosphate group between first a His and an Asp of the HK protein, followed by the transfer to a conserved His of the HPt protein and finally the transfer to an Asp in the receiver domain of the RR protein. As to expression, detected in the whole plant. Predominantly expressed in roots and stems.

It localises to the nucleus. In terms of biological role, transcriptional activator that binds specifically to the DNA sequence 5'-[AG]GATT-3'. Functions as a response regulator involved in His-to-Asp phosphorelay signal transduction system. Phosphorylation of the Asp residue in the receiver domain activates the ability of the protein to promote the transcription of target genes. Could directly activate some type-A response regulators in response to cytokinins. This is Two-component response regulator ARR11 (ARR11) from Arabidopsis thaliana (Mouse-ear cress).